Reading from the N-terminus, the 60-residue chain is Large ribosomal subunit protein bL32 (60 aa).

Disordered stretches follow at residues 1 to 28 (MAVQ…PGIA) and 41 to 60 (HISP…KSEA). The span at 9–19 (SPSKRGMHRSH) shows a compositional bias: basic residues.

This sequence belongs to the bacterial ribosomal protein bL32 family.

The polypeptide is Large ribosomal subunit protein bL32 (Verminephrobacter eiseniae (strain EF01-2)).